We begin with the raw amino-acid sequence, 151 residues long: Sperm surface protein Sp17 (151 aa).

Basic and acidic residues predominate over residues 68-98 (FYNNHAFEEQEPPEKSDPKQEESQIPGKEEE). 2 disordered regions span residues 68–115 (FYNN…EKEE) and 130–151 (AREE…EENK). Residues 114 to 143 (EEVAAVKIQAAFRGHVAREEVKKMKTDSLQ) enclose the IQ domain.

Homodimer. May interact with ROPN1. Testis- and sperm-specific.

The protein localises to the membrane. In terms of biological role, sperm surface zona pellucida binding protein. Helps to bind spermatozoa to the zona pellucida with high affinity. Might function in binding zona pellucida and carbohydrates. The protein is Sperm surface protein Sp17 (SPA17) of Macaca fascicularis (Crab-eating macaque).